We begin with the raw amino-acid sequence, 555 residues long: DNA repair and recombination protein rhm52 (555 aa).

Residues 148-152 (KRALR) mediate DNA binding. 2 disordered regions span residues 197–232 (VVAE…DSFD) and 251–555 (HPDE…MKLN). A compositionally biased stretch (low complexity) spans 260–276 (NSHASGSSGNTGASTTN). Composition is skewed to polar residues over residues 283-300 (SGNQ…SRMN) and 312-334 (TPNH…QNNH). Composition is skewed to low complexity over residues 354-375 (NNNN…GPQQ) and 382-404 (NGAA…AVAR). Residues 468–478 (DNPSNNAGNGV) show a composition bias toward polar residues. A compositionally biased stretch (low complexity) spans 479-490 (QNQPQKPQPSQQ). Polar residues predominate over residues 491–500 (RGSILNPQFD). The segment covering 536–547 (PNGTSNGNGTPG) has biased composition (low complexity).

It belongs to the RAD52 family. In terms of assembly, part of a complex that includes RAD51, RAD52 and RAD59.

The protein localises to the nucleus. In terms of biological role, involved in DNA double-strand break (DSB) repair and recombination. Promotes the annealing of complementary single-stranded DNA and by stimulation of the RAD51 recombinase. The sequence is that of DNA repair and recombination protein rhm52 (RHM52) from Pyricularia oryzae (strain 70-15 / ATCC MYA-4617 / FGSC 8958) (Rice blast fungus).